The primary structure comprises 137 residues: Large ribosomal subunit protein uL14 (137 aa).

Belongs to the universal ribosomal protein uL14 family. Component of the large ribosomal subunit. Mature ribosomes consist of a small (40S) and a large (60S) subunit. The 40S subunit contains about 32 different proteins and 1 molecule of RNA (18S). The 60S subunit contains 45 different proteins and 3 molecules of RNA (25S, 5.8S and 5S).

Its subcellular location is the cytoplasm. In terms of biological role, component of the ribosome, a large ribonucleoprotein complex responsible for the synthesis of proteins in the cell. The small ribosomal subunit (SSU) binds messenger RNAs (mRNAs) and translates the encoded message by selecting cognate aminoacyl-transfer RNA (tRNA) molecules. The large subunit (LSU) contains the ribosomal catalytic site termed the peptidyl transferase center (PTC), which catalyzes the formation of peptide bonds, thereby polymerizing the amino acids delivered by tRNAs into a polypeptide chain. The nascent polypeptides leave the ribosome through a tunnel in the LSU and interact with protein factors that function in enzymatic processing, targeting, and the membrane insertion of nascent chains at the exit of the ribosomal tunnel. The chain is Large ribosomal subunit protein uL14 from Candida albicans (strain SC5314 / ATCC MYA-2876) (Yeast).